A 655-amino-acid chain; its full sequence is MARSTIVLRGLRREYPSGEATVVALRDLDLTIEPGEMVAVMGASGSGKSTLMNILGCLDRPSSGSYQIAGRETASLDADELAALRREHFGFIFQRYHLLPELSALSNVEIPAIYAGQSRDERRDRANGLLARLGITDRASHRPNQLSGGQQQRVSIARALMNGADVILADEPTGALDRRSGDEVLRILDELHADGKTVIIVTHDASVAARAKRVIELSDGVVIADRATSTVSPAVAAPTAAAAQAQPRSRWPWQSRLDRIGEAFRMAMLAMAAHRLRTFLTMLGIIIGIASVVFIVAVGDAAKRKVLADISSLGTNTIEIFPGKDLGDVRSSKIKTLVVADARALRLQPYIDGVTPTVSTSSTLRHGPLEANALVNGVGDQYFAVKGTKLSAGRFFDADGLRDVSQDVVIDEKTRQTFFSDDPDGPIGKVLLVGRVPCRIIGVTQQQQGGFGSSQNLSVYLPYTTVQARFLGNSSLRSILVKVNDEVTTKAAELDVTRFLTLRHRVKDFVILNTDDIRKTITNTTETLTLMIAAIAVISLVVGGIGVMNIMLVSVSERVGEIGVRMAVGARRSDILQQFLIEAVMVCLIGGGLGVAVAYGLAATFNALVPMFQLGLSAGSIIAAFICSTGIGVVFGYLPARQASFLDPLAALSRD.

Positions 6-244 (IVLRGLRREY…VAAPTAAAAQ (239 aa)) constitute an ABC transporter domain. 42 to 49 (GASGSGKS) is a binding site for ATP. The next 4 membrane-spanning stretches (helical) occupy residues 279–299 (FLTM…VAVG), 528–548 (LTLM…IGVM), 579–599 (FLIE…AVAY), and 618–638 (AGSI…FGYL).

It belongs to the ABC transporter superfamily. Macrolide exporter (TC 3.A.1.122) family. As to quaternary structure, homodimer.

The protein resides in the cell inner membrane. Its function is as follows. Non-canonical ABC transporter that contains transmembrane domains (TMD), which form a pore in the inner membrane, and an ATP-binding domain (NBD), which is responsible for energy generation. Confers resistance against macrolides. This chain is Macrolide export ATP-binding/permease protein MacB, found in Rhodopseudomonas palustris (strain BisB18).